A 1115-amino-acid polypeptide reads, in one-letter code: Phytochrome E (1115 aa).

The region spanning 213–383 (DIGTLCDTVV…AFSLQLYMEL (171 aa)) is the GAF domain. C318 provides a ligand contact to phytochromobilin. The PAS 1 domain occupies 598–669 (MALELVRLVE…ALMCRALQGE (72 aa)). The PAC domain occupies 672–728 (RNVEVKLLKFGNHPTKEVVYLVVNACTSRDYKNDIIGVCFVGQDITPEKAVMDKFVR). Positions 732–803 (DYEAIIQSLN…DALTKFMILL (72 aa)) constitute a PAS 2 domain. One can recognise a Histidine kinase domain in the interval 880–1100 (YIQQQMKNPL…YFLIDLDFKT (221 aa)).

The protein belongs to the phytochrome family. In terms of assembly, homodimer. In terms of processing, contains one covalently linked phytochromobilin chromophore.

Its function is as follows. Regulatory photoreceptor which exists in two forms that are reversibly interconvertible by light: the Pr form that absorbs maximally in the red region of the spectrum and the Pfr form that absorbs maximally in the far-red region. Photoconversion of Pr to Pfr induces an array of morphogenic responses, whereas reconversion of Pfr to Pr cancels the induction of those responses. Pfr controls the expression of a number of nuclear genes including those encoding the small subunit of ribulose-bisphosphate carboxylase, chlorophyll A/B binding protein, protochlorophyllide reductase, rRNA, etc. It also controls the expression of its own gene(s) in a negative feedback fashion. The protein is Phytochrome E (PHYE) of Ipomoea nil (Japanese morning glory).